Here is a 387-residue protein sequence, read N- to C-terminus: Hydroxycarboxylic acid receptor 3 (387 aa).

Topologically, residues 1 to 28 (MNRHHLQDHFLEIDKKNCCVFRDDFIAK) are extracellular. The chain crosses the membrane as a helical span at residues 29 to 50 (VLPPVLGLEFIFGLLGNGLALW). Residues 51-63 (IFCFHLKSWKSSR) are Cytoplasmic-facing. The helical transmembrane segment at 64–85 (IFLFNLAVADFLLIICLPFVMD) threads the bilayer. The Extracellular segment spans residues 86–102 (YYVRRSDWKFGDIPCRL). Residues Cys-100 and Cys-177 are joined by a disulfide bond. The chain crosses the membrane as a helical span at residues 103 to 123 (VLFMFAMNRQGSIIFLTVVAV). Topologically, residues 124-142 (DRYFRVVHPHHALNKISNW) are cytoplasmic. Residues 143–163 (TAAIISCLLWGITVGLTVHLL) traverse the membrane as a helical segment. At 164-194 (KKKLLIQNGTANVCISFSICHTFRWHEAMFL) the chain is on the extracellular side. The chain crosses the membrane as a helical span at residues 195-209 (LEFFLPLGIILFCSA). At 210-236 (RIIWSLRQRQMDRHAKIKRAITFIMVV) the chain is on the cytoplasmic side. A helical membrane pass occupies residues 237 to 256 (AIVFVICFLPSVVVRIHIFW). Over 257-273 (LLHTSGTQNCEVYRSVD) the chain is Extracellular. The helical transmembrane segment at 274–298 (LAFFITLSFTYMNSMLDPVVYYFSS) threads the bilayer. Topologically, residues 299–387 (PSFPNFFSTL…LEKQLGCCIE (89 aa)) are cytoplasmic. The segment at 319-343 (GEPDNNRSTSVELTGDPNKTRGAPE) is disordered.

Belongs to the G-protein coupled receptor 1 family. As to expression, expression largely restricted to adipose tissue and spleen.

The protein localises to the cell membrane. Receptor for 3-OH-octanoid acid mediates a negative feedback regulation of adipocyte lipolysis to counteract prolipolytic influences under conditions of physiological or pathological increases in beta-oxidation rates. Acts as a low affinity receptor for nicotinic acid. This pharmacological effect requires nicotinic acid doses that are much higher than those provided by a normal diet. This chain is Hydroxycarboxylic acid receptor 3 (HCAR3), found in Homo sapiens (Human).